Here is a 416-residue protein sequence, read N- to C-terminus: Carboxypeptidase B (416 aa).

The signal sequence occupies residues 1–15 (MAFLILVTLALASAH). The propeptide at 16-109 (YSGEHFEGEK…LEGQFGRQVP (94 aa)) is activation peptide. Positions 117–411 (KYNRWETIEA…LAIKHLARYV (295 aa)) constitute a Peptidase M14 domain. His-175 and Glu-178 together coordinate Zn(2+). Substrate contacts are provided by residues 175–178 (HARE), Arg-233, and 250–251 (TR). Disulfide bonds link Cys-244/Cys-267 and Cys-258/Cys-272. Position 303 (His-303) interacts with Zn(2+). Residues 304–305 (SY) and Tyr-355 each bind substrate. Glu-377 (proton donor/acceptor) is an active-site residue.

This sequence belongs to the peptidase M14 family. The cofactor is Zn(2+).

Its subcellular location is the secreted. It is found in the zymogen granule lumen. The enzyme catalyses Preferential release of a C-terminal lysine or arginine amino acid.. The sequence is that of Carboxypeptidase B (CPB1) from Canis lupus familiaris (Dog).